We begin with the raw amino-acid sequence, 859 residues long: Fanconi anemia group B protein (859 aa).

N-acetylthreonine is present on T2.

In terms of assembly, belongs to the multisubunit FA complex composed of FANCA, FANCB, FANCC, FANCE, FANCF, FANCG, FANCL/PHF9 and FANCM. The complex is not found in FA patients.

It localises to the nucleus. DNA repair protein required for FANCD2 ubiquitination. The chain is Fanconi anemia group B protein (FANCB) from Homo sapiens (Human).